Consider the following 639-residue polypeptide: Chaperone protein DnaK (639 aa).

Thr-198 carries the post-translational modification Phosphothreonine; by autocatalysis. Positions 601 to 639 (AQQAPGADSCGGDCGQQQEAGAKPKDEKVVDADFEEVKK) are disordered. Over residues 622–639 (AKPKDEKVVDADFEEVKK) the composition is skewed to basic and acidic residues.

It belongs to the heat shock protein 70 family.

Its function is as follows. Acts as a chaperone. The protein is Chaperone protein DnaK of Trichlorobacter lovleyi (strain ATCC BAA-1151 / DSM 17278 / SZ) (Geobacter lovleyi).